Consider the following 218-residue polypeptide: Glutathione S-transferase Mu 2 (218 aa).

The region spanning proline 2–glycine 88 is the GST N-terminal domain. Tyrosine 7–tryptophan 8 contributes to the glutathione binding site. Phosphoserine is present on residues serine 27 and serine 44. Residues arginine 43–tryptophan 46, lysine 50, asparagine 59–leucine 60, and glutamine 72–serine 73 each bind glutathione. Residues threonine 90 to valine 208 enclose the GST C-terminal domain. Tyrosine 116 is a binding site for substrate.

This sequence belongs to the GST superfamily. Mu family. Homodimer.

The protein resides in the cytoplasm. The enzyme catalyses RX + glutathione = an S-substituted glutathione + a halide anion + H(+). It carries out the reaction 11(S)-hydroxy-14(S),15(S)-epoxy-(5Z,8Z,12E)-eicosatrienoate + glutathione = (11S,15S)-dihydroxy-14(R)-S-glutathionyl-(5Z,8Z,12E)-eicosatrienoate. Conjugation of reduced glutathione to a wide number of exogenous and endogenous hydrophobic electrophiles. Participates in the formation of novel hepoxilin regioisomers. Has activity toward aflatoxin B(1)-8,9-epoxide (AFBO). The chain is Glutathione S-transferase Mu 2 (GSTM2) from Macaca fascicularis (Crab-eating macaque).